The primary structure comprises 130 residues: Small ribosomal subunit protein uS9 (130 aa).

This sequence belongs to the universal ribosomal protein uS9 family.

In Blochmanniella floridana, this protein is Small ribosomal subunit protein uS9.